Here is a 541-residue protein sequence, read N- to C-terminus: Carotenoid 9,10(9',10')-cleavage dioxygenase 1 (541 aa).

Fe cation-binding residues include His222, His270, His336, and His526.

Belongs to the carotenoid oxygenase family. Requires Fe(2+) as cofactor.

The enzyme catalyses all-trans-zeaxanthin + 2 O2 = 4,9-dimethyldodeca-2,4,6,8,10-pentaenedial + 2 (3R)-hydroxy-beta-ionone. Functionally, cleaves a variety of carotenoids at the 9-10 and 9'-10' double bonds. Probably not involved in abscisic acid biosynthesis. This chain is Carotenoid 9,10(9',10')-cleavage dioxygenase 1 (CCD1), found in Pisum sativum (Garden pea).